The sequence spans 617 residues: Erythritol-mannosyl-transferase 1 (617 aa).

Disordered stretches follow at residues 365–396 (RNPGSPGFTSPLNSPTAVATPKWDEKRPIDSR) and 567–617 (RQRK…VTNP). Residues 371-381 (GFTSPLNSPTA) show a composition bias toward polar residues. Basic and acidic residues predominate over residues 386–396 (KWDEKRPIDSR). Polar residues predominate over residues 578 to 603 (TAKTSLSVDTTEVATPTFTDTETSLS).

It belongs to the UDP-glycosyltransferase family.

Its pathway is secondary metabolite biosynthesis. In terms of biological role, glycosyltransferase; part of the gene cluster that mediates the biosynthesis of mannosylerythritol lipids (MELs), surface-active substances that enhance the availability of water-insoluble substrates. Depending on the number of acetyl groups, mannosylerythritol lipids can be differentiated into MEL A (fully acetylated), MEL B and MEL C (monoacetylated at R-6 and R-4, respectively), and the fully deacetylated MEL D. The first step in the pathway is the generation of mannosylerythritol by the glycosyltransferase EMT1 which catalyzes the transfer of GDP-mannose to the C-4 atom of meso-erythritol. This reaction has to be stereospecific, since only mannosyl-D-erythritol is generated. The produced disaccharide is subsequently acylated with fatty acids of various lengths by the acyltransferases MAC1 and MAC2 at positions C-2 and C-3, repectively. The existence of MEL derivatives which carry an acetyl group at C-2 implies that at least MAC1 also accepts acetyl-CoA as a donor. The final step of MEL biosynthesis is the acetylation of the fully acylated mannosylerythritol lipids catalyzed by the acetyl-CoA-dependent acetyltransferase MAT1. MAT1 displays a relaxed regioselectivity and is able to transfer acetylgroups to both positions C-4 and C-6 of the mannosyl moiety. This is Erythritol-mannosyl-transferase 1 from Pseudozyma antarctica (strain T-34) (Yeast).